We begin with the raw amino-acid sequence, 762 residues long: Coleoptile phototropism protein 1 (762 aa).

The segment covering 1-12 has biased composition (basic and acidic residues); it reads MWESESESHGGE. The segment at 1–29 is disordered; it reads MWESESESHGGERGLVPVGGGGGSGRHEA. Positions 51–128 constitute a BTB domain; that stretch reads SDLLVKVGDV…SYGMAVDLTA (78 aa). Gly residues predominate over residues 227–238; sequence PAAIRGGGGSGG. Disordered regions lie at residues 227–264, 460–495, 687–718, and 731–762; these read PAAI…RQAV, MAVA…ASAS, QVDG…AWSS, and GADA…NSIS. The 340-residue stretch at 268–607 folds into the NPH3 domain; that stretch reads DWWFEDVSVL…VQVLFTEQVK (340 aa). Residues 654–691 adopt a coiled-coil conformation; sequence AAAKKDINTLKFELESMKAKYLELQHEMDALQKQVDGR. A compositionally biased stretch (low complexity) spans 696 to 709; the sequence is PSPAAAKIGKQQQQ. A compositionally biased stretch (gly residues) spans 736–747; it reads AGGGVAPPGGGE. The segment covering 752–762 has biased composition (basic residues); sequence KGPRRWRNSIS.

Belongs to the NPH3 family.

It functions in the pathway protein modification; protein ubiquitination. Functionally, may act as a substrate-specific adapter of an E3 ubiquitin-protein ligase complex (CUL3-RBX1-BTB) which mediates the ubiquitination and subsequent proteasomal degradation of target proteins. Plays a role as signal transduction component in coleoptile phototropism and lateral translocation of auxin. In Oryza sativa subsp. japonica (Rice), this protein is Coleoptile phototropism protein 1 (CPT1).